The chain runs to 475 residues: Aspartyl/glutamyl-tRNA(Asn/Gln) amidotransferase subunit B (475 aa).

This sequence belongs to the GatB/GatE family. GatB subfamily. Heterotrimer of A, B and C subunits.

It carries out the reaction L-glutamyl-tRNA(Gln) + L-glutamine + ATP + H2O = L-glutaminyl-tRNA(Gln) + L-glutamate + ADP + phosphate + H(+). The catalysed reaction is L-aspartyl-tRNA(Asn) + L-glutamine + ATP + H2O = L-asparaginyl-tRNA(Asn) + L-glutamate + ADP + phosphate + 2 H(+). Its function is as follows. Allows the formation of correctly charged Asn-tRNA(Asn) or Gln-tRNA(Gln) through the transamidation of misacylated Asp-tRNA(Asn) or Glu-tRNA(Gln) in organisms which lack either or both of asparaginyl-tRNA or glutaminyl-tRNA synthetases. The reaction takes place in the presence of glutamine and ATP through an activated phospho-Asp-tRNA(Asn) or phospho-Glu-tRNA(Gln). In Staphylococcus aureus (strain bovine RF122 / ET3-1), this protein is Aspartyl/glutamyl-tRNA(Asn/Gln) amidotransferase subunit B.